The chain runs to 162 residues: AP-1 complex subunit sigma-1 (162 aa).

This sequence belongs to the adaptor complexes small subunit family. Adaptor protein complex 1 (AP-1) is a heterotetramer composed of two large adaptins (gamma-type subunit apl4 and beta-type subunit apl2), a medium adaptin (mu-type subunit apm1) and a small adaptin (sigma-type subunit aps1). AP-1 interacts with clathrin.

It is found in the cytoplasm. The protein localises to the nucleus. It localises to the cytoplasmic vesicle. The protein resides in the clathrin-coated vesicle membrane. Its subcellular location is the endosome. It is found in the golgi apparatus. Functionally, component of the AP-1 complex which links clathrin to receptors in coated vesicles. Clathrin-associated protein complexes are believed to interact with the cytoplasmic tails of membrane proteins, leading to their selection and concentration. The chain is AP-1 complex subunit sigma-1 (vas2) from Schizosaccharomyces pombe (strain 972 / ATCC 24843) (Fission yeast).